Here is a 440-residue protein sequence, read N- to C-terminus: Chromosomal replication initiator protein DnaA (440 aa).

Residues 1–74 (MNPSQILENL…VQSGNKAIIN (74 aa)) form a domain I, interacts with DnaA modulators region. Residues 74-99 (NIQAQSAKQSNKSTKIDIAHIKAQST) are domain II. Positions 100–316 (ILNPSFTFES…GIIISLNAYA (217 aa)) are domain III, AAA+ region. ATP contacts are provided by Gly146, Gly148, Lys149, and Thr150. Residues 317–440 (TILGQEITLE…KNKILVKSQS (124 aa)) form a domain IV, binds dsDNA region.

It belongs to the DnaA family. In terms of assembly, oligomerizes as a right-handed, spiral filament on DNA at oriC.

The protein resides in the cytoplasm. In terms of biological role, plays an essential role in the initiation and regulation of chromosomal replication. ATP-DnaA binds to the origin of replication (oriC) to initiate formation of the DNA replication initiation complex once per cell cycle. Binds the DnaA box (a 9 base pair repeat at the origin) and separates the double-stranded (ds)DNA. Forms a right-handed helical filament on oriC DNA; dsDNA binds to the exterior of the filament while single-stranded (ss)DNA is stabiized in the filament's interior. The ATP-DnaA-oriC complex binds and stabilizes one strand of the AT-rich DNA unwinding element (DUE), permitting loading of DNA polymerase. After initiation quickly degrades to an ADP-DnaA complex that is not apt for DNA replication. Binds acidic phospholipids. This Campylobacter jejuni subsp. jejuni serotype O:2 (strain ATCC 700819 / NCTC 11168) protein is Chromosomal replication initiator protein DnaA.